The following is a 444-amino-acid chain: NAD-capped RNA hydrolase NUDT12 (444 aa).

2 ANK repeats span residues 11-40 and 60-80; these read EIIS…SLLN and SRQT…ANLL. K167 bears the N6-succinyllysine mark. Zn(2+)-binding residues include C266 and C269. N6-succinyllysine is present on K274. Positions 284 and 289 each coordinate Zn(2+). Residues Y300, 336-338, E352, E356, and E397 each bind substrate; that span reads AGF. Positions 301-435 constitute a Nudix hydrolase domain; it reads PRVDPVVIMQ…SRAIAHQLIK (135 aa). 4 residues coordinate Mg(2+): A336, E352, E356, and E397. Residues 337 to 358 carry the Nudix box motif; the sequence is GFIEPGETIEDAVRREVEEESG. The short motif at 442-444 is the Microbody targeting signal element; it reads PNL.

It belongs to the Nudix hydrolase family. NudC subfamily. In terms of assembly, homodimer. Homodimerization is essential for its catalytic activity and protein stability. Interacts (via ANK repeats) with BLMH. Requires Mg(2+) as cofactor. It depends on Zn(2+) as a cofactor.

Its subcellular location is the cytoplasm. The protein resides in the peroxisome. It is found in the cytoplasmic granule. It catalyses the reaction a 5'-end NAD(+)-phospho-ribonucleoside in mRNA + H2O = a 5'-end phospho-adenosine-phospho-ribonucleoside in mRNA + beta-nicotinamide D-ribonucleotide + 2 H(+). It carries out the reaction NAD(+) + H2O = beta-nicotinamide D-ribonucleotide + AMP + 2 H(+). The enzyme catalyses NADH + H2O = reduced beta-nicotinamide D-ribonucleotide + AMP + 2 H(+). The catalysed reaction is NADPH + H2O = reduced beta-nicotinamide D-ribonucleotide + adenosine 2',5'-bisphosphate + 2 H(+). MRNA decapping enzyme that specifically removes the nicotinamide adenine dinucleotide (NAD) cap from a subset of mRNAs by hydrolyzing the diphosphate linkage to produce nicotinamide mononucleotide (NMN) and 5' monophosphate mRNA. The NAD-cap is present at the 5'-end of some RNAs; in contrast to the canonical N7 methylguanosine (m7G) cap, the NAD cap promotes mRNA decay. Preferentially acts on NAD-capped transcripts in response to nutrient stress. Also acts on free nicotinamide adenine dinucleotide molecules: hydrolyzes NAD(H) into NMN(H) and AMP, and NADPH into NMNH and 2',5'-ADP. May act to regulate the concentration of peroxisomal nicotinamide nucleotide cofactors required for oxidative metabolism in this organelle. Regulates the levels of circadian clock components PER1, PER2, PER3 and CRY2 in the liver. This chain is NAD-capped RNA hydrolase NUDT12, found in Bos taurus (Bovine).